Consider the following 428-residue polypeptide: Glutamyl-tRNA reductase (428 aa).

Residues 49–52, Ser107, 112–114, and Gln118 each bind substrate; these read TCNR and EPQ. The Nucleophile role is filled by Cys50. 187 to 192 contributes to the NADP(+) binding site; the sequence is GAGETI.

This sequence belongs to the glutamyl-tRNA reductase family. Homodimer.

It catalyses the reaction (S)-4-amino-5-oxopentanoate + tRNA(Glu) + NADP(+) = L-glutamyl-tRNA(Glu) + NADPH + H(+). It participates in porphyrin-containing compound metabolism; protoporphyrin-IX biosynthesis; 5-aminolevulinate from L-glutamyl-tRNA(Glu): step 1/2. Its function is as follows. Catalyzes the NADPH-dependent reduction of glutamyl-tRNA(Glu) to glutamate 1-semialdehyde (GSA). The protein is Glutamyl-tRNA reductase of Pseudomonas fluorescens (strain Pf0-1).